A 985-amino-acid polypeptide reads, in one-letter code: MASSRAQRFNPIAFTPWPVTCITTIVYLALLIPILVINLVVPSAPETNPKGVNLTEAWRDLQHLTGGFHPYNSRRNDEVHEWLLSRINSIIRPTVEAGQRSSATDNLPEVFVFDDNRSNLTYSNGGVGKTSIVGVYFESTNIIVYIRGSEDDLENWWERSNGKPKGKGGVLVNAHYDSVSTGYGATDDGIGVVSLLQLLRYFTTPGNNPRKGLVLLFNNGEEDYLNGAHVFSQHPLSNFTHTFLNLEGAGAGGRAALFRTTDTEVTRFYGNTKHPFGSVLAADGFKMGLLRSQTDYVVFNGILGLRGLDLAFIAPRSRYHTDQDDTRHTSIDSLWHMLSASIGTTEGLVSYTGMDFDGKSKDQNKVNSGAGTLGVWFDMFGTAFAVFRLHTLFAISVALLVIAPLVIFVTNRMYLFSMSKSLEGTGDQVSLRGLRGFSRTPIILVTATTIPICLAYLLEKVNPYIVHSSQFSVWSMMFSAWIFLAWFLACAADFFRPSALHRAYSYTWIFIATWIMLVINTVYANQKGIAAGYFLLFYFAGAFLATWISYLELFALPRKGDFARQTTGRRPSSLSSRLLTSSADELRSNASPSTAEFPGAAGEDTDPTESTSLLRGQRTTFANYRTSGPGGAAEETDEREDINKGGTFEHEQSWSWTLPRWTWVLQLLLLAPIVLILVGQLALFLTASMCQVGSDGVSTFVVYLACAVFTTLLCIPLFPLIHRFTYHIPTFLFLVFIGTLIYNLVAFPFSPANRLKTFFIQEVDLDNGSNTVSLTGIQPYLTDAINSIPSAAGQNITCDKTTPFGKLERCSWSGLSPNVLGQGRERDTEIVPDKWITYNITKTVGKNKARIEISGRNTRACKLKFDRAVANFQVSGSAVDHRMPPTSRQGVAEIRLWSRTWENTWVVDINWHESADESDDDDDDDEKHDAPQNVLSGKAICMWSDANQPGVIPALDEVRLYAPSWIAISKAADGLVEASHSFTIQ.

Topologically, residues 1–20 (MASSRAQRFNPIAFTPWPVT) are cytoplasmic. Residues 21–41 (CITTIVYLALLIPILVINLVV) form a helical membrane-spanning segment. The Vacuolar portion of the chain corresponds to 42-388 (PSAPETNPKG…MFGTAFAVFR (347 aa)). Residues N53, N116, and N119 are each glycosylated (N-linked (GlcNAc...) asparagine). The Zn(2+) site is built by H175 and D187. The Proton acceptor role is filled by E221. Residue E222 coordinates Zn(2+). N238 carries an N-linked (GlcNAc...) asparagine glycan. Zn(2+)-binding residues include E247 and H320. The helical transmembrane segment at 389 to 409 (LHTLFAISVALLVIAPLVIFV) threads the bilayer. Over 410–440 (TNRMYLFSMSKSLEGTGDQVSLRGLRGFSRT) the chain is Cytoplasmic. The chain crosses the membrane as a helical span at residues 441 to 461 (PIILVTATTIPICLAYLLEKV). At 462–470 (NPYIVHSSQ) the chain is on the vacuolar side. The chain crosses the membrane as a helical span at residues 471–491 (FSVWSMMFSAWIFLAWFLACA). At 492-502 (ADFFRPSALHR) the chain is on the cytoplasmic side. The chain crosses the membrane as a helical span at residues 503–523 (AYSYTWIFIATWIMLVINTVY). Residues 524 to 527 (ANQK) are Vacuolar-facing. The chain crosses the membrane as a helical span at residues 528–548 (GIAAGYFLLFYFAGAFLATWI). Residues 549-666 (SYLELFALPR…TLPRWTWVLQ (118 aa)) lie on the Cytoplasmic side of the membrane. A disordered region spans residues 563 to 612 (ARQTTGRRPSSLSSRLLTSSADELRSNASPSTAEFPGAAGEDTDPTESTS). Over residues 566-582 (TTGRRPSSLSSRLLTSS) the composition is skewed to low complexity. Residues 667–687 (LLLLAPIVLILVGQLALFLTA) form a helical membrane-spanning segment. At 688–700 (SMCQVGSDGVSTF) the chain is on the vacuolar side. Residues 701–721 (VVYLACAVFTTLLCIPLFPLI) traverse the membrane as a helical segment. Residues 722-727 (HRFTYH) lie on the Cytoplasmic side of the membrane. The helical transmembrane segment at 728 to 748 (IPTFLFLVFIGTLIYNLVAFP) threads the bilayer. Over 749 to 985 (FSPANRLKTF…VEASHSFTIQ (237 aa)) the chain is Vacuolar. Residues N767, N795, and N839 are each glycosylated (N-linked (GlcNAc...) asparagine).

The protein belongs to the peptidase M28 family. Zn(2+) serves as cofactor.

The protein localises to the vacuole membrane. May be involved in vacuolar sorting and osmoregulation. The chain is Vacuolar membrane protease from Ajellomyces capsulatus (strain G186AR / H82 / ATCC MYA-2454 / RMSCC 2432) (Darling's disease fungus).